The following is a 144-amino-acid chain: uncharacterized protein (144 aa).

Residues 23-82 (EELYKKLENNLRKIETSYLDSKHCQDFKRKIEYYKIVPLISETKEIIKVLIQKIETLEIK) are a coiled coil.

This is an uncharacterized protein from Acanthamoeba polyphaga mimivirus (APMV).